A 425-amino-acid chain; its full sequence is Pre-mRNA-splicing factor PRP46 (425 aa).

7 WD repeats span residues 111 to 151 (GHTG…LKVT), 154 to 193 (GHIMTVRDICISARHPYMFSASQDKLVKCWDLERNTVVRD), 196 to 235 (GTLSGVHSVDLHPSLDLIVSAGRDSVVRVWDIRSRSCVLT), 238 to 279 (GHRG…KTLT), 281 to 320 (HKRNVRDLAFNPTEFSFASACTDDIRSWKLVDGQLLTNFN), 322 to 360 (EALGIVNTLACNQDGVLFAGGDTGELSFFDYKTGHKFQK), and 371 to 410 (ESEKGVLASTFDRTGLRLLTCERDKSIKIWKHIDGATQDS).

It belongs to the WD repeat PRL1/PRL2 family. Associated with the spliceosome.

The protein localises to the cytoplasm. The protein resides in the nucleus. Involved in pre-mRNA splicing and required for cell cycle progression at G2/M. This chain is Pre-mRNA-splicing factor PRP46 (PRP46), found in Eremothecium gossypii (strain ATCC 10895 / CBS 109.51 / FGSC 9923 / NRRL Y-1056) (Yeast).